The sequence spans 565 residues: Amino-acid acetyltransferase, mitochondrial (565 aa).

Positions 38–58 are disordered; that stretch reads DIATATPAATPSDGAQPPAQN. The N-acetyltransferase domain maps to 352-540; the sequence is LPVRVLRSME…EFGGGRLVRV (189 aa).

Belongs to the acetyltransferase family.

Its subcellular location is the mitochondrion. The enzyme catalyses L-glutamate + acetyl-CoA = N-acetyl-L-glutamate + CoA + H(+). Its pathway is amino-acid biosynthesis; L-arginine biosynthesis; N(2)-acetyl-L-ornithine from L-glutamate: step 1/4. Functionally, N-acetylglutamate synthase involved in arginine biosynthesis. This Cryptococcus neoformans var. neoformans serotype D (strain B-3501A) (Filobasidiella neoformans) protein is Amino-acid acetyltransferase, mitochondrial (ARG2).